The chain runs to 1131 residues: Probable chloride channel protein UM03490-D (1131 aa).

The next 12 helical transmembrane spans lie at 137 to 157 (GVIVLVGILIGLNMGVISLAT), 206 to 226 (VTVTASIGAAAAATDSAPILP), 305 to 325 (FPAWIIYMLFAGLLSFICAHL), 341 to 361 (IKCILAGFVINGYLGFWTLAI), 380 to 397 (GPAVHVACCIGNVVASFF), 414 to 434 (SSAAGVAVAFGSPIGGVLFSL), 485 to 505 (FEIMFYILIGIFGGLYGAFVI), 518 to 538 (YLVKHGVSEVVVLATLTAFVG), 577 to 597 (MVNSLLLATVLRTALVIVSYG), 603 to 623 (GIFVPSMAIGATFGRMVGILV), 643 to 663 (VPCITPGTYAFLGAAAALAGV), and 680 to 702 (ALTYILPTMIVVGITKGVADWFS). 2 disordered regions span residues 815 to 835 (DGVESSAHGAQQQQPDLLSVA) and 858 to 928 (ATGA…AGGG). The segment covering 866 to 877 (GLGSTSATGVAS) has biased composition (low complexity). One can recognise a CBS domain in the interval 944-1000 (IDPTPLIVQPGMPLETVMDMFKNLGPRVILVVEYGRLSGLVTVKDVLKRIAMQEKAE). Positions 1061–1078 (RASASRGGAPGSQAGQAR) are enriched in low complexity. Residues 1061–1131 (RASASRGGAP…VLGAQDDDDE (71 aa)) form a disordered region. Over residues 1104–1113 (STRQTSATKN) the composition is skewed to polar residues.

It belongs to the chloride channel (TC 2.A.49) family.

The protein resides in the membrane. Its function is as follows. Voltage-gated chloride channel. The polypeptide is Probable chloride channel protein UM03490-D (Mycosarcoma maydis (Corn smut fungus)).